Reading from the N-terminus, the 451-residue chain is MGRRYFGTDGIRGTVGEAPITPDFVLRLGYAAGKVLAGTADVAAGARPTVLIGKDTRVSGYMLEAALEAGFSAAGVDVMLAGPMPTPGVAYLTRALRLSAGVVISASHNPYQDNGIKFFSADGNKLPDETEAAIEAWLDKPLECASSDRLGKARRLEDAAGRYIEFCKSTFPAAYDLRGLKLVIDCAHGAAYQIAPHVFHELGADVIPIGVAPNGFNINDGVGATAPDALVRAVRANHADLGIALDGDADRLQVVDSTGRLYNGDELLYVLVKDRIATAGKVDGAVGTLMTNLAVEVALQREGVPFVRAAVGDRYVLEQLRERGWQLGAEGSGHILSLDRHSTGDGIVSALLVLAALKRSDRTLAQMLDGVTLFPQKLINVRMKPGADWKGSASIRAAIDAAEGALAGSGRVLIRASGTEPVLRVMVEAQQAADATRHAEAIADAVRMATS.

The active-site Phosphoserine intermediate is the Ser-107. Residues Ser-107, Asp-246, Asp-248, and Asp-250 each contribute to the Mg(2+) site. The residue at position 107 (Ser-107) is a Phosphoserine.

It belongs to the phosphohexose mutase family. The cofactor is Mg(2+). In terms of processing, activated by phosphorylation.

It carries out the reaction alpha-D-glucosamine 1-phosphate = D-glucosamine 6-phosphate. Its function is as follows. Catalyzes the conversion of glucosamine-6-phosphate to glucosamine-1-phosphate. This Burkholderia ambifaria (strain ATCC BAA-244 / DSM 16087 / CCUG 44356 / LMG 19182 / AMMD) (Burkholderia cepacia (strain AMMD)) protein is Phosphoglucosamine mutase.